A 340-amino-acid chain; its full sequence is Organic solute transporter subunit alpha (340 aa).

Residues 1–48 (MEPGRTQIKLDPRYTADLLEVLKTNYGIPSACFSQPPTAAQLLRALGP) lie on the Extracellular side of the membrane. A helical membrane pass occupies residues 49–69 (VELALTSILTLLALGSIAIFL). The Cytoplasmic portion of the chain corresponds to 70–87 (EDAVYLYKNTLCPIKRRT). A helical membrane pass occupies residues 88–108 (LLWKSSAPTVVSVLCCFGLWI). The Extracellular segment spans residues 109–118 (PRSLVLVEMT). Residues 119–139 (ITSFYAVCFYLLMLVMVEGFG) traverse the membrane as a helical segment. Over 140–181 (GKEAVLRTLRDTPMMVHTGPCCCCCPCCPRLLLTRKKLQLLM) the chain is Cytoplasmic. The helical transmembrane segment at 182–202 (LGPFQYAFLKITLTLVGLFLV) threads the bilayer. Topologically, residues 203–218 (PDGIYDPADISEGSTA) are extracellular. Residues 219 to 239 (LWINTFLGVSTLLALWTLGII) form a helical membrane-spanning segment. Over 240–255 (SRQARLHLGEQNMGAK) the chain is Cytoplasmic. The chain crosses the membrane as a helical span at residues 256-276 (FALFQVLLILTALQPSIFSVL). Residues 277 to 294 (ANGGQIACSPPYSSKTRS) lie on the Extracellular side of the membrane. The helical transmembrane segment at 295–317 (QVMNCHLLILETFLMTVLTRMYY) threads the bilayer. Residues 318–340 (RRKDHKVGYETFSSPDLDLNLKA) lie on the Cytoplasmic side of the membrane. A Phosphoserine modification is found at Ser330.

It belongs to the OST-alpha family. In terms of assembly, interacts with SLC51B. The Ost-alpha/Ost-beta complex is a heterodimer composed of alpha (SLC51A) and beta (SLC51B) subunit. As to expression, widely expressed with a high expression in ileum. Expressed in testis, colon, liver, small intestine, kidney, ovary and adrenal gland; and at low levels in heart, lung, brain, pituitary, thyroid gland, uterus, prostate, mammary gland and fat.

Its subcellular location is the cell membrane. It localises to the endoplasmic reticulum membrane. It catalyses the reaction taurocholate(out) = taurocholate(in). It carries out the reaction estrone 3-sulfate(out) = estrone 3-sulfate(in). The enzyme catalyses dehydroepiandrosterone 3-sulfate(out) = dehydroepiandrosterone 3-sulfate(in). The catalysed reaction is tauroursodeoxycholate(out) = tauroursodeoxycholate(in). It catalyses the reaction glycoursodeoxycholate(out) = glycoursodeoxycholate(in). It carries out the reaction glycocholate(out) = glycocholate(in). The enzyme catalyses taurochenodeoxycholate(out) = taurochenodeoxycholate(in). The catalysed reaction is glycochenodeoxycholate(out) = glycochenodeoxycholate(in). It catalyses the reaction taurodeoxycholate(out) = taurodeoxycholate(in). It carries out the reaction glycodeoxycholate(out) = glycodeoxycholate(in). The enzyme catalyses prostaglandin E2(out) = prostaglandin E2(in). Its function is as follows. Essential component of the Ost-alpha/Ost-beta complex, a heterodimer that acts as the intestinal basolateral transporter responsible for bile acid export from enterocytes into portal blood. Efficiently transports the major species of bile acids (taurocholate). Taurine conjugates are transported more efficiently across the basolateral membrane than glycine-conjugated bile acids. Can also transport steroids such as estrone 3-sulfate and dehydroepiandrosterone 3-sulfate, therefore playing a role in the enterohepatic circulation of sterols. Able to transport eicosanoids such as prostaglandin E2. The polypeptide is Organic solute transporter subunit alpha (SLC51A) (Homo sapiens (Human)).